The chain runs to 223 residues: Uracil-DNA glycosylase (223 aa).

D67 functions as the Proton acceptor in the catalytic mechanism.

Belongs to the uracil-DNA glycosylase (UDG) superfamily. UNG family.

The protein resides in the cytoplasm. It catalyses the reaction Hydrolyzes single-stranded DNA or mismatched double-stranded DNA and polynucleotides, releasing free uracil.. In terms of biological role, excises uracil residues from the DNA which can arise as a result of misincorporation of dUMP residues by DNA polymerase or due to deamination of cytosine. The polypeptide is Uracil-DNA glycosylase (Borrelia hermsii (strain HS1 / DAH)).